An 853-amino-acid chain; its full sequence is Transcription factor macR (853 aa).

Positions 18-45 (CIVCRRRKVRCGREQPECANCVRMKENC) form a DNA-binding region, zn(2)-C6 fungal-type. 4 disordered regions span residues 54–122 (ESTG…PYPT), 138–166 (ANAP…PTPS), 734–775 (ASDL…AGNK), and 833–853 (LGSQ…DFPG). 3 stretches are compositionally biased toward polar residues: residues 104–116 (PQVS…SPQR), 141–163 (PQIN…SLFP), and 738–752 (RATS…SSTT).

It localises to the nucleus. Transcription factor that regulates the expression of the gene cluster that mediates the biosynthesis of macrophorins, isoprenoid epoxycyclohexenones containing cyclized drimane moieties. The sequence is that of Transcription factor macR from Penicillium terrestre.